A 564-amino-acid polypeptide reads, in one-letter code: 2-succinyl-5-enolpyruvyl-6-hydroxy-3-cyclohexene-1-carboxylate synthase (564 aa).

It belongs to the TPP enzyme family. MenD subfamily. Homodimer. Mg(2+) is required as a cofactor. Mn(2+) serves as cofactor. It depends on thiamine diphosphate as a cofactor.

It catalyses the reaction isochorismate + 2-oxoglutarate + H(+) = 5-enolpyruvoyl-6-hydroxy-2-succinyl-cyclohex-3-ene-1-carboxylate + CO2. It functions in the pathway quinol/quinone metabolism; 1,4-dihydroxy-2-naphthoate biosynthesis; 1,4-dihydroxy-2-naphthoate from chorismate: step 2/7. The protein operates within quinol/quinone metabolism; menaquinone biosynthesis. In terms of biological role, catalyzes the thiamine diphosphate-dependent decarboxylation of 2-oxoglutarate and the subsequent addition of the resulting succinic semialdehyde-thiamine pyrophosphate anion to isochorismate to yield 2-succinyl-5-enolpyruvyl-6-hydroxy-3-cyclohexene-1-carboxylate (SEPHCHC). The chain is 2-succinyl-5-enolpyruvyl-6-hydroxy-3-cyclohexene-1-carboxylate synthase from Vibrio vulnificus (strain YJ016).